The primary structure comprises 216 residues: Octanoyltransferase (216 aa).

Residues Asn-35 to Phe-213 enclose the BPL/LPL catalytic domain. Substrate-binding positions include Arg-77–His-84, Ser-144–Gly-146, and Gly-157–Ser-159. Residue Cys-175 is the Acyl-thioester intermediate of the active site.

It belongs to the LipB family.

The protein resides in the cytoplasm. The enzyme catalyses octanoyl-[ACP] + L-lysyl-[protein] = N(6)-octanoyl-L-lysyl-[protein] + holo-[ACP] + H(+). The protein operates within protein modification; protein lipoylation via endogenous pathway; protein N(6)-(lipoyl)lysine from octanoyl-[acyl-carrier-protein]: step 1/2. Its function is as follows. Catalyzes the transfer of endogenously produced octanoic acid from octanoyl-acyl-carrier-protein onto the lipoyl domains of lipoate-dependent enzymes. Lipoyl-ACP can also act as a substrate although octanoyl-ACP is likely to be the physiological substrate. The sequence is that of Octanoyltransferase from Prochlorococcus marinus (strain MIT 9215).